A 555-amino-acid polypeptide reads, in one-letter code: Cinnamate beta-D-glucosyltransferase (555 aa).

H19 functions as the Proton acceptor in the catalytic mechanism. Residue H19 coordinates an anthocyanidin. Residues Q344, H359, W362, N363, S364, and E367 each coordinate UDP-alpha-D-glucose. An an anthocyanidin-binding site is contributed by G382. Positions 383 and 384 each coordinate UDP-alpha-D-glucose.

The protein belongs to the UDP-glycosyltransferase family. In terms of tissue distribution, highest expression detected in fruit, with lower levels detected in flower and petiole. Barely detectable in leaf and root.

The enzyme catalyses (E)-cinnamate + UDP-alpha-D-glucose = 1-O-(trans-cinnamoyl)-beta-D-glucose + UDP. Its function is as follows. Broad spectrum multifunctional glucosyltransferase. Catalyzes the formation of cinnamic acid and p-coumaric acid glucose esters during fruit ripening. Accepted substrates range from derivatives of cinnamic acid and benzoic acid to heterocyclic and aliphatic compounds, resulting in the formation of O- and S-glucose esters and O-glucosides. May also be involved in detoxification of xenobiotics. This chain is Cinnamate beta-D-glucosyltransferase, found in Fragaria ananassa (Strawberry).